A 658-amino-acid chain; its full sequence is MSDVRVIIQRDSEREERVVTTGTTAAELFAGERSIIAARVSGDLKDLAYEVKDGETVEAVEISSEDGLDILRHSTAHVMAQAVQELFPEAKLGIGPPVKDGFYYDFDVEKPFHPDDLKAIEKKMQEIQKRGQRFSRRVVTDEAAREELADEPYKLELIGLKGSASSDDGADVEVGAGELTIYDNLDAKTGELCWKDLCRGPHLPTTRNIPAFKLMRNAAAYWRGSEKNPMLQRIYGTAWPTKDELKAHLEFLAEAEKRDHRKLGSELDLFSIPEQIGSGLAVFHPKGGIIRRVMEDYSRRRHEEEGYEFVYTPHATKGKLFETSGHLDWYADGMYPPMQLDEGVDYYLKPMNCPMHNLIFDARGRSYRELPLRLFEFGTVYRYEKSGVVHGLTRARGFTQDDAHIYCTREQMSEELDKTLTFVLNLLRDYGLNDFYLELSTKDPEKFVGSDEAWEEATETLRQVAEKQNLELVADPGGAAFYGPKISVQARDAIGRTWQMSTIQLDFNLPERFSLEYTAADGAKTRPVMIHRALFGSIERFFAVLLEHYAGAMPPWLAPVQAVGIPVGDAHVQYLEEFAAEARRKGLRVDVDASSDRMQKKIRTQQKQKVPFMIIVGDEDMHGGTVSFRYRDGSQENGIPRDQALAKLVDVVERRIQV.

Positions 1-61 (MSDVRVIIQR…KDGETVEAVE (61 aa)) constitute a TGS domain. The catalytic stretch occupies residues 259–554 (DHRKLGSELD…LLEHYAGAMP (296 aa)). Zn(2+) is bound by residues cysteine 353, histidine 404, and histidine 531.

Belongs to the class-II aminoacyl-tRNA synthetase family. Homodimer. Requires Zn(2+) as cofactor.

Its subcellular location is the cytoplasm. It carries out the reaction tRNA(Thr) + L-threonine + ATP = L-threonyl-tRNA(Thr) + AMP + diphosphate + H(+). In terms of biological role, catalyzes the attachment of threonine to tRNA(Thr) in a two-step reaction: L-threonine is first activated by ATP to form Thr-AMP and then transferred to the acceptor end of tRNA(Thr). Also edits incorrectly charged L-seryl-tRNA(Thr). This chain is Threonine--tRNA ligase, found in Streptomyces coelicolor (strain ATCC BAA-471 / A3(2) / M145).